A 326-amino-acid polypeptide reads, in one-letter code: MASISSLNQIPCKTLQITSQYSKPTSKISTLPISSTNFPSKTELHRSISVKEFTNPKPKFTAQATNYDKEDEWGPEVEQIRPGGVAVVEEEPPKEPSEIELLKKQLADSLYGTNRGLSASSETRAEIVELITQLESKNPNPAPTEALTLLNGKWILAYTSFSGLFPLLSRGNLPLVRVEEISQTIDSESFTVQNSVVFAGPLATTSISTNAKFEVRSPKRVQIKFEEGIIGTPQLTDSIVLPENVEFLGQKIDLSPFKGLITSVQDTASSVAKSISSQPPIKFPITNNNAQSWLLTTYLDDELRISRGDAGSVFVLIKEGSPLLKP.

The transit peptide at 1 to 63 directs the protein to the chloroplast; that stretch reads MASISSLNQI…TNPKPKFTAQ (63 aa).

Belongs to the LIPC family. Associates with the major light-harvesting antenna complex polypeptides of the PSII oxygen-evolving complex. In terms of tissue distribution, expressed in leaves.

It is found in the plastid. The protein localises to the chloroplast thylakoid membrane. In terms of biological role, required for normal plant growth. May be both photoprotective and play an ancillary role in photosynthesis. May structurally stabilize thylakoids during osmotic and oxidative stress. This chain is Light-induced protein, chloroplastic, found in Solanum tuberosum (Potato).